The following is a 101-amino-acid chain: Putative monooxygenase Rv0793 (101 aa).

The region spanning 5–93 is the ABM domain; sequence VAVIARFMPR…LTRPVAVTVL (89 aa).

In terms of assembly, homodimer.

Its function is as follows. Putative monooygenase that might be involved in antibiotic biosynthesis, or may act as reactive oxygen species scavenger that could help in evading host defenses. This is Putative monooxygenase Rv0793 from Mycobacterium tuberculosis (strain ATCC 25618 / H37Rv).